The sequence spans 171 residues: Serine acetyltransferase (171 aa).

It belongs to the transferase hexapeptide repeat family.

Its subcellular location is the cytoplasm. The enzyme catalyses L-serine + acetyl-CoA = O-acetyl-L-serine + CoA. Its pathway is amino-acid biosynthesis; L-cysteine biosynthesis; L-cysteine from L-serine: step 1/2. This Helicobacter pylori (strain ATCC 700392 / 26695) (Campylobacter pylori) protein is Serine acetyltransferase (cysE).